Consider the following 1113-residue polypeptide: uncharacterized protein (1113 aa).

313 to 320 is a binding site for ATP; it reads GPPGTGKS.

This sequence belongs to the DNA2/NAM7 helicase family.

This is an uncharacterized protein from Mycoplasma pneumoniae (strain ATCC 29342 / M129 / Subtype 1) (Mycoplasmoides pneumoniae).